Here is a 108-residue protein sequence, read N- to C-terminus: Complement inhibitor CirpT4 (108 aa).

The signal sequence occupies residues 1–19; that stretch reads MRAFVALFCTLVAFATVIC. 4 cysteine pairs are disulfide-bonded: cysteine 40–cysteine 64, cysteine 59–cysteine 98, cysteine 76–cysteine 99, and cysteine 85–cysteine 104.

It belongs to the CirpT family. Expressed in salivary glands.

It localises to the secreted. Functionally, complement inhibitor. Prevents complement-mediated activation of C5 by sterically preventing direct binding of C5 to its convertase (binding with domains MG4 and MG5). Binds C5 at a different binding site than the other tick complement inhibitors OmCI and RaCI3, and the drug eculizumab. Inhibits the complement in human, rat and guinea pig, and also shows a reduced inhibition in rabbit and pig. The polypeptide is Complement inhibitor CirpT4 (Amblyomma americanum (Lone star tick)).